A 617-amino-acid polypeptide reads, in one-letter code: UvrABC system protein C (617 aa).

The region spanning 11–85 is the GIY-YIG domain; sequence TTPGVYIFRK…IKQHRPHYNV (75 aa). Residues 194–229 enclose the UVR domain; that stretch reads APVIARLKEDMKVAAQGQDFEQAARLRDRVQAVEKL.

Belongs to the UvrC family. As to quaternary structure, interacts with UvrB in an incision complex.

It is found in the cytoplasm. Functionally, the UvrABC repair system catalyzes the recognition and processing of DNA lesions. UvrC both incises the 5' and 3' sides of the lesion. The N-terminal half is responsible for the 3' incision and the C-terminal half is responsible for the 5' incision. The chain is UvrABC system protein C from Deinococcus radiodurans (strain ATCC 13939 / DSM 20539 / JCM 16871 / CCUG 27074 / LMG 4051 / NBRC 15346 / NCIMB 9279 / VKM B-1422 / R1).